Reading from the N-terminus, the 433-residue chain is Zinc finger and SCAN domain-containing protein 4 (433 aa).

Positions 44 to 126 constitute an SCAN box domain; it reads RMVLNSFQDS…RFIEDLTDDS (83 aa). Composition is skewed to polar residues over residues 165 to 185, 195 to 210, and 277 to 299; these read TTRE…SLET, GWNS…ENIT, and QPEQ…STCE. Disordered stretches follow at residues 165 to 210 and 275 to 301; these read TTRE…ENIT and ISQP…CEVH. 4 C2H2-type zinc fingers span residues 312–334, 340–362, 368–390, and 396–418; these read YKCE…QRRH, FVCP…QIIH, FTCS…ERIH, and YTCP…MRTH.

It is found in the nucleus. The protein resides in the chromosome. The protein localises to the telomere. Embryonic stem (ES) cell-specific transcription factor required to regulate ES cell pluripotency. Binds telomeres and plays a key role in genomic stability in ES cells by regulating telomere elongation. Acts as an activator of spontaneous telomere sister chromatid exchange (T-SCE) and telomere elongation in undifferentiated ES cells. This is Zinc finger and SCAN domain-containing protein 4 (ZSCAN4) from Homo sapiens (Human).